We begin with the raw amino-acid sequence, 108 residues long: Putative DNA-directed RNA polymerase subunit 1 inactive homolog (108 aa).

This is Putative DNA-directed RNA polymerase subunit 1 inactive homolog from Acanthamoeba polyphaga (Amoeba).